A 312-amino-acid polypeptide reads, in one-letter code: uncharacterized protein (312 aa).

Residues 1–14 are Extracellular-facing; that stretch reads MSIVETCISFVSTN. A helical membrane pass occupies residues 15-35; the sequence is PFYPFCTGLLLNCVVTPLYFW. The Cytoplasmic portion of the chain corresponds to 36-41; it reads KTQNGR. A helical transmembrane segment spans residues 42–62; it reads IVVVSLLQFVVLYATAFISIG. At 63–179 the chain is on the extracellular side; it reads TDKSLYRNKW…LEYDQDTATE (117 aa). Residues 70–173 form the FAD-binding FR-type domain; the sequence is NKWVALPLSK…KGPLGELEYD (104 aa). The chain crosses the membrane as a helical span at residues 180–200; sequence LGIIAGGSGITPVLQVLQEII. Residues 201–312 lie on the Cytoplasmic side of the membrane; that stretch reads PSPEDLTHIS…GNGTDKVFVF (112 aa).

This sequence belongs to the flavoprotein pyridine nucleotide cytochrome reductase family. It depends on FAD as a cofactor.

It localises to the membrane. This is an uncharacterized protein from Saccharomyces cerevisiae (strain ATCC 204508 / S288c) (Baker's yeast).